Reading from the N-terminus, the 621-residue chain is tRNA uridine 5-carboxymethylaminomethyl modification enzyme MnmG (621 aa).

11–16 (GGGHAG) contributes to the FAD binding site. Residue 270–284 (GPRYCPSIEDKINRF) participates in NAD(+) binding.

It belongs to the MnmG family. Homodimer. Heterotetramer of two MnmE and two MnmG subunits. It depends on FAD as a cofactor.

It is found in the cytoplasm. NAD-binding protein involved in the addition of a carboxymethylaminomethyl (cmnm) group at the wobble position (U34) of certain tRNAs, forming tRNA-cmnm(5)s(2)U34. The chain is tRNA uridine 5-carboxymethylaminomethyl modification enzyme MnmG from Helicobacter pylori (strain Shi470).